Here is a 331-residue protein sequence, read N- to C-terminus: Probable inactive O-methyltransferase 11 (331 aa).

S-adenosyl-L-methionine is bound by residues glycine 179, aspartate 202, 224–226, aspartate 225, phenylalanine 226, and lysine 239; that span reads GDF.

Belongs to the class I-like SAM-binding methyltransferase superfamily. Cation-independent O-methyltransferase family. COMT subfamily.

The sequence is that of Probable inactive O-methyltransferase 11 (omt11) from Dictyostelium discoideum (Social amoeba).